The chain runs to 391 residues: Phosphoglycerate kinase (391 aa).

Substrate-binding positions include 21–23 (DLN), Arg-36, 59–62 (HLGR), Arg-113, and Arg-146. Residues Lys-197, Glu-319, and 345–348 (GGDT) contribute to the ATP site.

The protein belongs to the phosphoglycerate kinase family. In terms of assembly, monomer.

The protein localises to the cytoplasm. The enzyme catalyses (2R)-3-phosphoglycerate + ATP = (2R)-3-phospho-glyceroyl phosphate + ADP. The protein operates within carbohydrate degradation; glycolysis; pyruvate from D-glyceraldehyde 3-phosphate: step 2/5. This Shewanella piezotolerans (strain WP3 / JCM 13877) protein is Phosphoglycerate kinase.